The following is a 216-amino-acid chain: Probable ubiquitin-conjugating enzyme E2 ECU01_1010 (216 aa).

Residues 1 to 10 (MFKPSAHRRL) are compositionally biased toward basic residues. The segment at 1-29 (MFKPSAHRRLPREDDIIQEDDEDGPLWPS) is disordered. The UBC core domain occupies 29–196 (SALRRLSNEE…VIRIAREEDE (168 aa)). The active-site Glycyl thioester intermediate is Cys-120.

It belongs to the ubiquitin-conjugating enzyme family.

The enzyme catalyses S-ubiquitinyl-[E1 ubiquitin-activating enzyme]-L-cysteine + [E2 ubiquitin-conjugating enzyme]-L-cysteine = [E1 ubiquitin-activating enzyme]-L-cysteine + S-ubiquitinyl-[E2 ubiquitin-conjugating enzyme]-L-cysteine.. The protein operates within protein modification; protein ubiquitination. Its function is as follows. Catalyzes the covalent attachment of ubiquitin to other proteins so as to signal them for selective protein degradation. Involved in the formation of multiubiquitin chains. The sequence is that of Probable ubiquitin-conjugating enzyme E2 ECU01_1010 from Encephalitozoon cuniculi (strain GB-M1) (Microsporidian parasite).